The primary structure comprises 205 residues: Holliday junction branch migration complex subunit RuvA (205 aa).

The tract at residues 1–64 (MIGKLKGTID…EDQLRLFGFL (64 aa)) is domain I. The domain II stretch occupies residues 65–143 (SALEREWFRL…AFAGEMSASI (79 aa)). Residues 144–153 (GLKQELGEGV) form a flexible linker region. The segment at 153 to 205 (VAAAPVSDAVSALTNLGYSRDQAANAVAAALKNGGEGGDSAKLIRLGLKELAR) is domain III.

This sequence belongs to the RuvA family. In terms of assembly, homotetramer. Forms an RuvA(8)-RuvB(12)-Holliday junction (HJ) complex. HJ DNA is sandwiched between 2 RuvA tetramers; dsDNA enters through RuvA and exits via RuvB. An RuvB hexamer assembles on each DNA strand where it exits the tetramer. Each RuvB hexamer is contacted by two RuvA subunits (via domain III) on 2 adjacent RuvB subunits; this complex drives branch migration. In the full resolvosome a probable DNA-RuvA(4)-RuvB(12)-RuvC(2) complex forms which resolves the HJ.

The protein resides in the cytoplasm. In terms of biological role, the RuvA-RuvB-RuvC complex processes Holliday junction (HJ) DNA during genetic recombination and DNA repair, while the RuvA-RuvB complex plays an important role in the rescue of blocked DNA replication forks via replication fork reversal (RFR). RuvA specifically binds to HJ cruciform DNA, conferring on it an open structure. The RuvB hexamer acts as an ATP-dependent pump, pulling dsDNA into and through the RuvAB complex. HJ branch migration allows RuvC to scan DNA until it finds its consensus sequence, where it cleaves and resolves the cruciform DNA. The sequence is that of Holliday junction branch migration complex subunit RuvA from Sinorhizobium fredii (strain NBRC 101917 / NGR234).